The following is a 376-amino-acid chain: Methylthioribose-1-phosphate isomerase (376 aa).

The active-site Proton donor is D256.

Belongs to the eIF-2B alpha/beta/delta subunits family. MtnA subfamily.

Its subcellular location is the cytoplasm. It is found in the nucleus. The enzyme catalyses 5-(methylsulfanyl)-alpha-D-ribose 1-phosphate = 5-(methylsulfanyl)-D-ribulose 1-phosphate. The protein operates within amino-acid biosynthesis; L-methionine biosynthesis via salvage pathway; L-methionine from S-methyl-5-thio-alpha-D-ribose 1-phosphate: step 1/6. Catalyzes the interconversion of methylthioribose-1-phosphate (MTR-1-P) into methylthioribulose-1-phosphate (MTRu-1-P). In Vitis vinifera (Grape), this protein is Methylthioribose-1-phosphate isomerase.